The following is a 638-amino-acid chain: Phosphomethylpyrimidine synthase (638 aa).

Substrate is bound by residues Asn-235, Met-264, Tyr-293, His-329, 349–351 (SRG), 390–393 (DGLR), and Glu-429. Residue His-433 participates in Zn(2+) binding. Residue Tyr-456 participates in substrate binding. His-497 lines the Zn(2+) pocket. Cys-577, Cys-580, and Cys-585 together coordinate [4Fe-4S] cluster.

It belongs to the ThiC family. In terms of assembly, homodimer. [4Fe-4S] cluster serves as cofactor.

It catalyses the reaction 5-amino-1-(5-phospho-beta-D-ribosyl)imidazole + S-adenosyl-L-methionine = 4-amino-2-methyl-5-(phosphooxymethyl)pyrimidine + CO + 5'-deoxyadenosine + formate + L-methionine + 3 H(+). It participates in cofactor biosynthesis; thiamine diphosphate biosynthesis. Its function is as follows. Catalyzes the synthesis of the hydroxymethylpyrimidine phosphate (HMP-P) moiety of thiamine from aminoimidazole ribotide (AIR) in a radical S-adenosyl-L-methionine (SAM)-dependent reaction. The sequence is that of Phosphomethylpyrimidine synthase from Polaromonas naphthalenivorans (strain CJ2).